The primary structure comprises 489 residues: Dihydropyrimidinase 1 (489 aa).

Zn(2+)-binding residues include His61, His63, and Lys156. Position 156 is an N6-carboxylysine (Lys156). Tyr161 lines the substrate pocket. Zn(2+) contacts are provided by His189 and His245. Ser295 provides a ligand contact to substrate. Asp323 provides a ligand contact to Zn(2+). Asn344 contributes to the substrate binding site.

This sequence belongs to the metallo-dependent hydrolases superfamily. Hydantoinase/dihydropyrimidinase family. As to quaternary structure, homotetramer. The cofactor is Zn(2+). Carboxylation allows a single lysine to coordinate two zinc ions. In terms of tissue distribution, in L1-L2 larvae, expressed in body hypodermal cells, hemidesmosomes and in a neuronal cell between the pharynx and ring neuropil. In adults, expression is seen in body hypodermal cells and pharynx.

The protein resides in the nucleus. It carries out the reaction 5,6-dihydrouracil + H2O = 3-(carbamoylamino)propanoate + H(+). In Caenorhabditis elegans, this protein is Dihydropyrimidinase 1 (dhp-1).